The following is a 435-amino-acid chain: UDP-N-acetylmuramate--L-alanine ligase (435 aa).

ATP is bound at residue 108 to 114 (GSHGKTS).

This sequence belongs to the MurCDEF family.

It localises to the cytoplasm. The enzyme catalyses UDP-N-acetyl-alpha-D-muramate + L-alanine + ATP = UDP-N-acetyl-alpha-D-muramoyl-L-alanine + ADP + phosphate + H(+). It participates in cell wall biogenesis; peptidoglycan biosynthesis. Its function is as follows. Cell wall formation. The chain is UDP-N-acetylmuramate--L-alanine ligase from Exiguobacterium sp. (strain ATCC BAA-1283 / AT1b).